Here is an 802-residue protein sequence, read N- to C-terminus: MAAEALAAEAVASRLERQEEDIRWLWSEVERLRDEQLNAPYSCQAEGPCLTREVAQLRAENCDLRHRLCSLRLCLAEERSRQATLESAELEAAQEAGAQPPPSQSQDKDMKKKKMKESEADSEVKHQPIFIKERLKLFEILKKDHQLLLAIYGKKGDTSNIITVRVADGQTVQGEVWKTTPYQVAAEISQELAESTVIAKVNGELWDLDRPLEGDSSLELLTFDNEEAQAVYWHSSAHILGEAMELYYGGHLCYGPPIENGFYYDMFIEDRAVSSTELSALENICKAIIKEKQPFERLEVSKEILLEMFKYNKFKCRILNEKVNTATTTVYRCGPLIDLCKGPHVRHTGKIKTIKIFKNSSTYWEGNPEMETLQRIYGISFPDNKMMRDWEKFQEEAKNRDHRKIGKEQELFFFHDLSPGSCFFLPRGAFIYNTLTDFIREEYHKRDFTEVLSPNMYNSKLWEASGHWQHYSENMFTFEIEKDTFALKPMNCPGHCLMFAHRPRSWREMPIRFADFGVLHRNELSGTLSGLTRVRRFQQDDAHIFCTVEQIEEEIKGCLQFLQSVYSTFGFSFQLNLSTRPENFLGEIEMWNEAEKQLQNSLMDFGEPWKMNPGDGAFYGPKIDIKIKDAIGRYHQCATIQLDFQLPIRFNLTYVSKDGDDKKRPVIIHRAILGSVERMIAILSENYGGKWPFWLSPRQVMVIPVGPTCEKYALQVSSEFFEEGFMADVDLDHSCTLNKKIRNAQLAQYNFILVVGEKEKIDNAVNVRTRDNKIHGEILVTSAIDKLKNLRKTRTLNAEEAF.

An N-acetylalanine modification is found at alanine 2. Coiled coils occupy residues 3–23 (AEAL…EDIR) and 76–96 (AEER…AQEA). The segment covering 86-98 (ESAELEAAQEAGA) has biased composition (low complexity). The interval 86-123 (ESAELEAAQEAGAQPPPSQSQDKDMKKKKMKESEADSE) is disordered. Basic and acidic residues predominate over residues 106–123 (QDKDMKKKKMKESEADSE). Residues 157-222 (DTSNIITVRV…EGDSSLELLT (66 aa)) enclose the TGS domain. Serine 453 is modified (phosphoserine). The Nuclear localization signal signature appears at 786–792 (KLKNLRK).

This sequence belongs to the class-II aminoacyl-tRNA synthetase family. May be a component of the multisynthetase complex (MSC), a large multi-subunit complex which contains at least eight different aminoacyl-tRNA synthetases plus three auxillary subunits AIMP1, AIMP2 and EEF1E1. Interacts with the MSC components EPRS1, AIMP1, AIMP2 and KARS1.

It localises to the cytoplasm. Its subcellular location is the nucleus. The enzyme catalyses tRNA(Thr) + L-threonine + ATP = L-threonyl-tRNA(Thr) + AMP + diphosphate + H(+). Its function is as follows. Catalyzes the attachment of threonine to tRNA(Thr) in a two-step reaction: threonine is first activated by ATP to form Thr-AMP and then transferred to the acceptor end of tRNA(Thr). Also edits incorrectly charged tRNA(Thr) via its editing domain, at the post-transfer stage. This is Threonine--tRNA ligase 2, cytoplasmic from Homo sapiens (Human).